The following is a 448-amino-acid chain: Adenylosuccinate synthetase (448 aa).

GTP contacts are provided by residues 22 to 28 (GDEGKGK) and 50 to 52 (GHT). Asp23 serves as the catalytic Proton acceptor. Asp23 and Gly50 together coordinate Mg(2+). IMP is bound by residues 23-26 (DEGK), 48-51 (NAGH), Thr139, Arg153, Gln234, Thr249, and Arg321. His51 acts as the Proton donor in catalysis. 317-323 (SVTGRPR) serves as a coordination point for substrate. GTP is bound by residues Arg323, 349–351 (KLD), and 431–433 (STG).

The protein belongs to the adenylosuccinate synthetase family. Homodimer. Mg(2+) serves as cofactor.

It is found in the cytoplasm. The catalysed reaction is IMP + L-aspartate + GTP = N(6)-(1,2-dicarboxyethyl)-AMP + GDP + phosphate + 2 H(+). It participates in purine metabolism; AMP biosynthesis via de novo pathway; AMP from IMP: step 1/2. In terms of biological role, plays an important role in the de novo pathway of purine nucleotide biosynthesis. Catalyzes the first committed step in the biosynthesis of AMP from IMP. The protein is Adenylosuccinate synthetase of Burkholderia thailandensis (strain ATCC 700388 / DSM 13276 / CCUG 48851 / CIP 106301 / E264).